A 253-amino-acid chain; its full sequence is Phosphate import ATP-binding protein PstB (253 aa).

In terms of domain architecture, ABC transporter spans 7 to 248 (IKVRDLNLYY…PRDRRTEDYI (242 aa)). 39–46 (GPSGCGKS) contributes to the ATP binding site.

The protein belongs to the ABC transporter superfamily. Phosphate importer (TC 3.A.1.7) family. The complex is composed of two ATP-binding proteins (PstB), two transmembrane proteins (PstC and PstA) and a solute-binding protein (PstS).

It localises to the cell membrane. The catalysed reaction is phosphate(out) + ATP + H2O = ADP + 2 phosphate(in) + H(+). Its function is as follows. Part of the ABC transporter complex PstSACB involved in phosphate import. Responsible for energy coupling to the transport system. The polypeptide is Phosphate import ATP-binding protein PstB (Carboxydothermus hydrogenoformans (strain ATCC BAA-161 / DSM 6008 / Z-2901)).